A 345-amino-acid polypeptide reads, in one-letter code: Protein RecA (345 aa).

66-73 (GPESSGKT) is a binding site for ATP.

Belongs to the RecA family.

It localises to the cytoplasm. Its function is as follows. Can catalyze the hydrolysis of ATP in the presence of single-stranded DNA, the ATP-dependent uptake of single-stranded DNA by duplex DNA, and the ATP-dependent hybridization of homologous single-stranded DNAs. It interacts with LexA causing its activation and leading to its autocatalytic cleavage. This chain is Protein RecA, found in Acidithiobacillus ferrooxidans (strain ATCC 23270 / DSM 14882 / CIP 104768 / NCIMB 8455) (Ferrobacillus ferrooxidans (strain ATCC 23270)).